The primary structure comprises 179 residues: Inner membrane-spanning protein YciB (179 aa).

5 helical membrane passes run 3–23 (FLYD…FGIY), 49–69 (NALI…LWLQ), 76–96 (WKPT…QWLF), 119–139 (LNLA…YVAY), and 149–169 (FKLF…TLLL).

Belongs to the YciB family.

Its subcellular location is the cell inner membrane. Functionally, plays a role in cell envelope biogenesis, maintenance of cell envelope integrity and membrane homeostasis. The chain is Inner membrane-spanning protein YciB from Methylobacillus flagellatus (strain ATCC 51484 / DSM 6875 / VKM B-1610 / KT).